Here is a 914-residue protein sequence, read N- to C-terminus: Probable dipeptidyl-aminopeptidase B (914 aa).

Positions 1 to 10 are enriched in acidic residues; it reads MGKSEADEDA. Residues 1 to 81 are disordered; sequence MGKSEADEDA…DQPFLPSRKG (81 aa). Over 1–89 the chain is Cytoplasmic; the sequence is MGKSEADEDA…KGSGARARRV (89 aa). Residues 20–34 show a composition bias toward low complexity; it reads SSSAASQTSSDSGLS. The helical; Signal-anchor for type II membrane protein transmembrane segment at 90-110 threads the bilayer; that stretch reads FWGLLLLCLAGWVLAFVLFLI. The Vacuolar portion of the chain corresponds to 111–914; the sequence is QGRSGYSATS…FKRALPVFVH (804 aa). Asn347 and Asn638 each carry an N-linked (GlcNAc...) asparagine glycan. Ser752 (charge relay system) is an active-site residue. Asn806 is a glycosylation site (N-linked (GlcNAc...) asparagine). Catalysis depends on charge relay system residues Asp829 and His862.

Belongs to the peptidase S9B family.

The protein resides in the vacuole membrane. It carries out the reaction Release of an N-terminal dipeptide, Xaa-Yaa-|-Zaa-, from a polypeptide, preferentially when Yaa is Pro, provided Zaa is neither Pro nor hydroxyproline.. In terms of biological role, type IV dipeptidyl-peptidase which removes N-terminal dipeptides sequentially from polypeptides having unsubstituted N-termini provided that the penultimate residue is proline. The sequence is that of Probable dipeptidyl-aminopeptidase B (dapB) from Aspergillus terreus (strain NIH 2624 / FGSC A1156).